Reading from the N-terminus, the 295-residue chain is 4-diphosphocytidyl-2-C-methyl-D-erythritol kinase (295 aa).

The active site involves K22. 106-116 (PAGGGFGGGSS) serves as a coordination point for ATP. D148 is a catalytic residue.

The protein belongs to the GHMP kinase family. IspE subfamily.

The catalysed reaction is 4-CDP-2-C-methyl-D-erythritol + ATP = 4-CDP-2-C-methyl-D-erythritol 2-phosphate + ADP + H(+). It participates in isoprenoid biosynthesis; isopentenyl diphosphate biosynthesis via DXP pathway; isopentenyl diphosphate from 1-deoxy-D-xylulose 5-phosphate: step 3/6. Functionally, catalyzes the phosphorylation of the position 2 hydroxy group of 4-diphosphocytidyl-2C-methyl-D-erythritol. The polypeptide is 4-diphosphocytidyl-2-C-methyl-D-erythritol kinase (Xanthomonas oryzae pv. oryzae (strain MAFF 311018)).